The following is a 115-amino-acid chain: Large ribosomal subunit protein bL19 (115 aa).

This sequence belongs to the bacterial ribosomal protein bL19 family.

Functionally, this protein is located at the 30S-50S ribosomal subunit interface and may play a role in the structure and function of the aminoacyl-tRNA binding site. The protein is Large ribosomal subunit protein bL19 of Bacillus licheniformis (strain ATCC 14580 / DSM 13 / JCM 2505 / CCUG 7422 / NBRC 12200 / NCIMB 9375 / NCTC 10341 / NRRL NRS-1264 / Gibson 46).